Reading from the N-terminus, the 277-residue chain is Shikimate dehydrogenase (NADP(+)) (277 aa).

Shikimate contacts are provided by residues 15–17 and T62; that span reads SKS. K66 serves as the catalytic Proton acceptor. E78 contributes to the NADP(+) binding site. 2 residues coordinate shikimate: N87 and D103. NADP(+)-binding positions include 127-131, 151-156, and G238; these read GAGGA and NRTHEK.

The protein belongs to the shikimate dehydrogenase family. Homodimer.

It catalyses the reaction shikimate + NADP(+) = 3-dehydroshikimate + NADPH + H(+). It functions in the pathway metabolic intermediate biosynthesis; chorismate biosynthesis; chorismate from D-erythrose 4-phosphate and phosphoenolpyruvate: step 4/7. Its function is as follows. Involved in the biosynthesis of the chorismate, which leads to the biosynthesis of aromatic amino acids. Catalyzes the reversible NADPH linked reduction of 3-dehydroshikimate (DHSA) to yield shikimate (SA). This chain is Shikimate dehydrogenase (NADP(+)), found in Shewanella frigidimarina (strain NCIMB 400).